We begin with the raw amino-acid sequence, 334 residues long: D-fructose 1,6-bisphosphatase class 2/sedoheptulose 1,7-bisphosphatase (334 aa).

Residues Asp33, Glu57, Asp85, and Glu88 each contribute to the Mn(2+) site. Substrate contacts are provided by residues 88 to 90 (EGT), Tyr119, 164 to 166 (RAR), and 186 to 188 (DGD). Residue Glu213 coordinates Mn(2+).

Belongs to the FBPase class 2 family. Homotetramer. The cofactor is Mn(2+).

It catalyses the reaction beta-D-fructose 1,6-bisphosphate + H2O = beta-D-fructose 6-phosphate + phosphate. The enzyme catalyses D-sedoheptulose 1,7-bisphosphate + H2O = D-sedoheptulose 7-phosphate + phosphate. It participates in carbohydrate biosynthesis; Calvin cycle. In terms of biological role, catalyzes the hydrolysis of fructose 1,6-bisphosphate (Fru 1,6-P2) and sedoheptulose 1,7-bisphosphate (Sed 1,7-P2) to fructose 6-phosphate and sedoheptulose 7-phosphate, respectively. The chain is D-fructose 1,6-bisphosphatase class 2/sedoheptulose 1,7-bisphosphatase from Parasynechococcus marenigrum (strain WH8102).